The sequence spans 162 residues: MESKILRVGMADAKVTKSPGILTTIGLGSCVGIVLYDPIAKVAGLVHIMLPYSNKISDNSNKLKFADTGIEILIEEMLKEGANPKRLISKLAGGAQMFSSKINSDIMNIGERNVIATKEVLKKLGIPIVAEDTGGNYGRTIEFYSEDGRLLVKTIGHGVKYI.

This sequence belongs to the CheD family.

The catalysed reaction is L-glutaminyl-[protein] + H2O = L-glutamyl-[protein] + NH4(+). Its function is as follows. Probably deamidates glutamine residues to glutamate on methyl-accepting chemotaxis receptors (MCPs), playing an important role in chemotaxis. The chain is Probable chemoreceptor glutamine deamidase CheD from Caldanaerobacter subterraneus subsp. tengcongensis (strain DSM 15242 / JCM 11007 / NBRC 100824 / MB4) (Thermoanaerobacter tengcongensis).